We begin with the raw amino-acid sequence, 106 residues long: ATP-dependent Clp protease adapter protein ClpS (106 aa).

This sequence belongs to the ClpS family. Binds to the N-terminal domain of the chaperone ClpA.

In terms of biological role, involved in the modulation of the specificity of the ClpAP-mediated ATP-dependent protein degradation. This Nocardia farcinica (strain IFM 10152) protein is ATP-dependent Clp protease adapter protein ClpS.